Consider the following 359-residue polypeptide: MALGNHSTITEFLLLGLSADPNIRALLFVLFLGIYLLTIMENLMLLLMIRADSCLHKPMYFFLSHLSFVDLCFSSVIVPKMLENLLSQRKTISVEGCLAQVFFVFVTAGTEACLLSGMAYDRHAAICRPLLYGQIMGKQLYMHLVWGSWGLGFLDALINVLLAVNMVFCEAKIIHHYSYEMPSLLPLSCSDISRSLIALLCSTLLHGLGNFLLVFLSYTRIISTILSISSTSGRSKAFSTCSAHLTAVTLYYGSGLLRHLMPNSGSPIELIFSVQYTVVTPMLNSLIYSLKNKEVKGERSLRDSSHLPQLHKGQARWKRPAFTEGRREPGHPELSIPVTPQPQGACACSALRAAPTALP.

The Extracellular portion of the chain corresponds to 1 to 25; it reads MALGNHSTITEFLLLGLSADPNIRA. Asparagine 5 carries N-linked (GlcNAc...) asparagine glycosylation. The chain crosses the membrane as a helical span at residues 26–46; it reads LLFVLFLGIYLLTIMENLMLL. Over 47–54 the chain is Cytoplasmic; it reads LMIRADSC. A helical membrane pass occupies residues 55–75; sequence LHKPMYFFLSHLSFVDLCFSS. Residues 76-99 lie on the Extracellular side of the membrane; it reads VIVPKMLENLLSQRKTISVEGCLA. Cysteine 97 and cysteine 189 are disulfide-bonded. Residues 100–120 traverse the membrane as a helical segment; the sequence is QVFFVFVTAGTEACLLSGMAY. The Cytoplasmic segment spans residues 121–139; sequence DRHAAICRPLLYGQIMGKQ. The chain crosses the membrane as a helical span at residues 140 to 160; sequence LYMHLVWGSWGLGFLDALINV. Topologically, residues 161–197 are extracellular; that stretch reads LLAVNMVFCEAKIIHHYSYEMPSLLPLSCSDISRSLI. The helical transmembrane segment at 198 to 217 threads the bilayer; the sequence is ALLCSTLLHGLGNFLLVFLS. Topologically, residues 218–237 are cytoplasmic; it reads YTRIISTILSISSTSGRSKA. A helical transmembrane segment spans residues 238 to 258; that stretch reads FSTCSAHLTAVTLYYGSGLLR. Residues 259-269 lie on the Extracellular side of the membrane; it reads HLMPNSGSPIE. A helical transmembrane segment spans residues 270-290; that stretch reads LIFSVQYTVVTPMLNSLIYSL. The Cytoplasmic segment spans residues 291–359; that stretch reads KNKEVKGERS…ALRAAPTALP (69 aa). The tract at residues 301 to 338 is disordered; it reads LRDSSHLPQLHKGQARWKRPAFTEGRREPGHPELSIPV.

This sequence belongs to the G-protein coupled receptor 1 family.

Its subcellular location is the cell membrane. Odorant receptor. This is Olfactory receptor 8S1 (OR8S1) from Homo sapiens (Human).